The sequence spans 145 residues: Ribosomal protein uL24-like (145 aa).

Disordered regions lie at residues 1–21 (MKFN…HFNA) and 122–145 (KAKS…KMQE). Residues K136 and K142 each participate in a glycyl lysine isopeptide (Lys-Gly) (interchain with G-Cter in SUMO2) cross-link.

It belongs to the universal ribosomal protein uL24 family.

In Homo sapiens (Human), this protein is Ribosomal protein uL24-like (RPL26L1).